The sequence spans 398 residues: S-adenosylmethionine synthase 2 (398 aa).

Histidine 16 serves as a coordination point for ATP. Aspartate 18 is a Mg(2+) binding site. Glutamate 51 contributes to the K(+) binding site. L-methionine-binding residues include glutamate 64 and glutamine 108. A flexible loop region spans residues 108-118 (QSADIAQGVDA). Residues 176–178 (DSK), 242–243 (KF), aspartate 251, 257–258 (RK), alanine 274, and lysine 278 each bind ATP. Aspartate 251 lines the L-methionine pocket. Lysine 282 lines the L-methionine pocket.

It belongs to the AdoMet synthase family. As to quaternary structure, homotetramer; dimer of dimers. The cofactor is Mg(2+). K(+) is required as a cofactor.

It localises to the cytoplasm. It carries out the reaction L-methionine + ATP + H2O = S-adenosyl-L-methionine + phosphate + diphosphate. The protein operates within amino-acid biosynthesis; S-adenosyl-L-methionine biosynthesis; S-adenosyl-L-methionine from L-methionine: step 1/1. Functionally, catalyzes the formation of S-adenosylmethionine (AdoMet) from methionine and ATP. The overall synthetic reaction is composed of two sequential steps, AdoMet formation and the subsequent tripolyphosphate hydrolysis which occurs prior to release of AdoMet from the enzyme. The chain is S-adenosylmethionine synthase 2 from Rhodopseudomonas palustris (strain BisB18).